The chain runs to 639 residues: Versicolorin B synthase stcN (639 aa).

The N-terminal stretch at 1–19 is a signal peptide; it reads MPAWSLLVLSALPVVGMFA. Residues 77–78 and 98–99 contribute to the FAD site; these read TA and EA. An N-linked (GlcNAc...) asparagine glycan is attached at asparagine 109. 164–167 contributes to the FAD binding site; it reads GAML. Asparagine 214 carries N-linked (GlcNAc...) asparagine glycosylation. The PAS domain occupies 263–301; the sequence is GFSNGQLLGRSYITHTIHPKTRRRDTASTSYLQTALRTS. Residues asparagine 444 and asparagine 501 are each glycosylated (N-linked (GlcNAc...) asparagine). FAD contacts are provided by residues alanine 609 and 620-621; that span reads PM.

Belongs to the GMC oxidoreductase family. In terms of assembly, homodimer. It depends on FAD as a cofactor.

It localises to the cytoplasm. Its subcellular location is the cytosol. The catalysed reaction is (2S-3S)-versiconal hemiacetal = versicolorin B + H2O. The enzyme catalyses (S)-5'-oxoaverantin + H(+) = (1'S,5'S)-averufin + H2O. It functions in the pathway mycotoxin biosynthesis; sterigmatocystin biosynthesis. Norsolorinic acid reductase; part of the gene cluster that mediates the biosynthesis of sterigmatocystin (ST), a polyketide-derived furanocoumarin which is part of the most toxic and carcinogenic compounds among the known mycotoxins. The first step in the biosynthesis of sterigmatocystin is the production of hexanoate by the fatty acid synthase (FAS) units stcJ and stcK. The polyketide backbone is assembled by the non-reducing polyketide synthase stcA by condensation of the starter hexanoyl-CoA and 7 malonyl-CoA extender units followed by cyclization and release of norsolorinic acid. Norsolorinic acid is the first stable intermediate in the biosynthesis of sterigmatocystin and is converted into averantin (AVN) by the ketoreductase stcE which reduces the hexanoate ketone to an alcohol. Averantin is then oxidized into 5'-hydroxyaverantin (HAVN) by the cytochrome P450 monooxygenase stcF. 5'-hydroxyaverantin is further converted to 5'-oxyaverantin (OAVN) by the 5'-hydroxyaverantin dehydrogenase stcG. The next step is the conversion of OAVN into averufin (AVF) which is catalyzed by a yet to be identified enzyme. The cytochrome P450 monooxygenase stcB and the flavin-binding monooxygenase stcW are both required for the conversion of averufin to 1-hydroxyversicolorone. The esterase stcI probably catalyzes the formation of versiconal hemiacetal acetate from 1-hydroxyversicolorone. The oxydoreductase stcN then probably catalyzes the biosynthetic step from versiconal to versicolorin B (VERB). The next step is performed by the versicolorin B desaturase stcL to produce versicolorin A (VERA). The ketoreductase stcU and the cytochrome P450 monooxygenase stcS are involved in the conversion of versicolorin A to demethylsterigmatocystin. The Baeyer-Villiger oxidas stcQ and the reductase stcR might be involved in the biosynthetic step from versicolorin A to demethylsterigmatocystin. The final step in the biosynthesis of sterigmatocystin is the methylation of demethylsterigmatocystin catalyzed by the methyltransferase stcP. The sequence is that of Versicolorin B synthase stcN from Emericella nidulans (strain FGSC A4 / ATCC 38163 / CBS 112.46 / NRRL 194 / M139) (Aspergillus nidulans).